Here is a 156-residue protein sequence, read N- to C-terminus: Snaclec subunit B (156 aa).

A signal peptide spans 1 to 23 (MGRSIFVNLGLLVVAFSLRGSEA). Intrachain disulfides connect C25-C36, C53-C144, and C119-C136. In terms of domain architecture, C-type lectin spans 32–145 (YDKYCYKVFD…CKSTLPFTCK (114 aa)).

It belongs to the snaclec family. In terms of assembly, heterodimer of subunits A and B; disulfide-linked. Expressed by the venom gland.

Its subcellular location is the secreted. Interferes with one step of hemostasis (modulation of platelet aggregation, or coagulation cascade, for example). The protein is Snaclec subunit B of Philodryas olfersii (Green snake).